A 78-amino-acid chain; its full sequence is RNA-binding protein Hfq (78 aa).

Residues 10–69 (DPFLNALRKEHVPVSIYLVNGIKLQGHIESFDQYVVLLRNTVTQMVYKHAISTVVPARAV) form the Sm domain.

Belongs to the Hfq family. Homohexamer.

RNA chaperone that binds small regulatory RNA (sRNAs) and mRNAs to facilitate mRNA translational regulation in response to envelope stress, environmental stress and changes in metabolite concentrations. Also binds with high specificity to tRNAs. The protein is RNA-binding protein Hfq of Herminiimonas arsenicoxydans.